The sequence spans 289 residues: tRNA-cytidine(32) 2-sulfurtransferase (289 aa).

The PP-loop motif signature appears at 49–54; sequence SGGKDS. The [4Fe-4S] cluster site is built by C124, C127, and C215.

This sequence belongs to the TtcA family. Homodimer. Mg(2+) is required as a cofactor. It depends on [4Fe-4S] cluster as a cofactor.

Its subcellular location is the cytoplasm. It catalyses the reaction cytidine(32) in tRNA + S-sulfanyl-L-cysteinyl-[cysteine desulfurase] + AH2 + ATP = 2-thiocytidine(32) in tRNA + L-cysteinyl-[cysteine desulfurase] + A + AMP + diphosphate + H(+). Its pathway is tRNA modification. In terms of biological role, catalyzes the ATP-dependent 2-thiolation of cytidine in position 32 of tRNA, to form 2-thiocytidine (s(2)C32). The sulfur atoms are provided by the cysteine/cysteine desulfurase (IscS) system. The protein is tRNA-cytidine(32) 2-sulfurtransferase of Methylococcus capsulatus (strain ATCC 33009 / NCIMB 11132 / Bath).